A 179-amino-acid polypeptide reads, in one-letter code: Large ribosomal subunit protein uL6c (179 aa).

This sequence belongs to the universal ribosomal protein uL6 family. As to quaternary structure, part of the 50S ribosomal subunit.

It localises to the plastid. The protein resides in the cyanelle. Binds 23S rRNA. The protein is Large ribosomal subunit protein uL6c (rpl6) of Cyanophora paradoxa.